Consider the following 889-residue polypeptide: Disease resistance protein RPS5 (889 aa).

Glycine 2 carries the N-myristoyl glycine lipid modification. Cysteine 4 is lipidated: S-palmitoyl cysteine. Residues 29-58 (IHNLSKNLASLQKAMRMLKARQYDVIRRLE) adopt a coiled-coil conformation. Residues 140-444 (SEATPFADVD…SEGFINEKEG (305 aa)) enclose the NB-ARC domain. 183–190 (GMGGVGKT) provides a ligand contact to ATP. LRR repeat units lie at residues 518 to 539 (TVRKISLMNNEIEEIFDSHECA), 540 to 561 (ALTTLFLQKNDVVKISAEFFRC), 564 to 586 (HLVVLDLSENQSLNELPEEISEL), 588 to 610 (SLRYFNLSYTCIHQLPVGLWTLK), 611 to 633 (KLIHLNLEHMSSLGSILGISNLW), and 634 to 656 (NLRTLGLRDSRLLLDMSLVKELQ).

This sequence belongs to the disease resistance NB-LRR family. As to quaternary structure, in uninfected plants, interacts with PBS1 through the coiled coil domain. Homodimer.

It localises to the cell membrane. In terms of biological role, disease resistance (R) protein that specifically recognizes the avrPphB type III effector avirulence protein from Pseudomonas syringae. Also confers resistance against Hyaloperonospora parasitica (downy mildew). Resistance proteins guard the plant against pathogens that contain an appropriate avirulence protein via an indirect interaction with this avirulence protein. That triggers a defense system including the hypersensitive response, which restricts the pathogen growth. Requires PBS1 to trigger the defense reaction against avrPphB. In case of infection by Pseudomonas syringae, AvrPphB triggers RPS5-mediated defense mechanism via the cleavage of PBS1, suggesting that the cleavage of PBS1 could trigger an exchange of ADP for ATP, thereby activating RPS5. May function as a fine-tuned sensor of alterations in the structure of the effector target PBS1. This is Disease resistance protein RPS5 (RPS5) from Arabidopsis thaliana (Mouse-ear cress).